The sequence spans 715 residues: ATP-dependent DNA helicase Hel308 (715 aa).

The short motif at 1 to 29 (MKVGELNVSEKIKEILRERGIEELYPPQA) is the Q motif element. ATP is bound by residues Gln28 and 46–53 (IPTASGKT). A Helicase ATP-binding domain is found at 33 to 197 (TSGVLEGENL…WLNAKLIRSD (165 aa)). Positions 145–148 (DEIH) match the DEAH box motif. The 197-residue stretch at 226 to 422 (WEELVYDAVK…ILRSQILALI (197 aa)) folds into the Helicase C-terminal domain.

It belongs to the helicase family. Hel308 subfamily. As to quaternary structure, monomer.

The catalysed reaction is Couples ATP hydrolysis with the unwinding of duplex DNA by translocating in the 3'-5' direction.. It carries out the reaction ATP + H2O = ADP + phosphate + H(+). DNA-dependent ATPase and 3'-5' DNA helicase that may be involved in repair of stalled replication forks. Its function is as follows. Rapidly unwinds double-stranded (ds)DNA with a 3'-overhang, has no strand reannealing capabilities. Binds single-stranded (ss)DNA, dsDNA with a 3'-overhang and ssRNA. The chain is ATP-dependent DNA helicase Hel308 from Pyrococcus abyssi (strain GE5 / Orsay).